Reading from the N-terminus, the 353-residue chain is GTPase Obg (353 aa).

In terms of domain architecture, Obg spans 1 to 159 (MKFLDEAKVY…RWIWLRLKLI (159 aa)). An OBG-type G domain is found at 160-327 (ADAGLVGLPN…VLRALVAVIG (168 aa)). GTP contacts are provided by residues 166-173 (GLPNAGKS), 191-195 (FTTLH), 212-215 (DIPG), 279-282 (NKID), and 308-310 (SGV). Positions 173 and 193 each coordinate Mg(2+).

Belongs to the TRAFAC class OBG-HflX-like GTPase superfamily. OBG GTPase family. In terms of assembly, monomer. Requires Mg(2+) as cofactor.

It is found in the cytoplasm. In terms of biological role, an essential GTPase which binds GTP, GDP and possibly (p)ppGpp with moderate affinity, with high nucleotide exchange rates and a fairly low GTP hydrolysis rate. Plays a role in control of the cell cycle, stress response, ribosome biogenesis and in those bacteria that undergo differentiation, in morphogenesis control. The chain is GTPase Obg from Rhodopseudomonas palustris (strain TIE-1).